The chain runs to 309 residues: Homoserine kinase (309 aa).

P91–C101 serves as a coordination point for ATP.

Belongs to the GHMP kinase family. Homoserine kinase subfamily.

The protein resides in the cytoplasm. It carries out the reaction L-homoserine + ATP = O-phospho-L-homoserine + ADP + H(+). It functions in the pathway amino-acid biosynthesis; L-threonine biosynthesis; L-threonine from L-aspartate: step 4/5. In terms of biological role, catalyzes the ATP-dependent phosphorylation of L-homoserine to L-homoserine phosphate. This is Homoserine kinase from Salmonella arizonae (strain ATCC BAA-731 / CDC346-86 / RSK2980).